Reading from the N-terminus, the 606-residue chain is Transmembrane 9 superfamily member 1 (606 aa).

The first 27 residues, 1-27 (MTVVGNPRSWSCRWLPILILLLGTGHG), serve as a signal peptide directing secretion. Residue N178 is glycosylated (N-linked (GlcNAc...) asparagine). 4 consecutive transmembrane segments (helical) span residues 237-257 (LSIINSMVLVFLLVGFVAVIL), 310-330 (VLGVGAQFLALGTGIIVMALL), 339-359 (GAINSAAILLYALTCCISGYV), and 373-393 (VWNIILTTSLFSVPFFLTWSV). Residue N401 is glycosylated (N-linked (GlcNAc...) asparagine). Helical transmembrane passes span 412–432 (ILLLLTVWLLVGFPLTVIGGI), 469–489 (VGGFLPFSAISVELYYIFATV), 499–519 (GILFFVFAILLSVGACISIAL), and 535–555 (SVLSVGSTGLFIFLYSVFYYA). An N-linked (GlcNAc...) asparagine glycan is attached at N559. A helical membrane pass occupies residues 570 to 590 (FGYSLLTGYVFFLMLGTISFF).

Belongs to the nonaspanin (TM9SF) (TC 9.A.2) family.

Its subcellular location is the lysosome membrane. It localises to the cytoplasmic vesicle. The protein localises to the autophagosome membrane. Plays an essential role in autophagy. The sequence is that of Transmembrane 9 superfamily member 1 (TM9SF1) from Pongo abelii (Sumatran orangutan).